The sequence spans 161 residues: MNDGFADDELSLPKATVQKMVSDILPVDLTFTKEARDLLIECCVEFIHLVSSEANEICEKEAKKTIAAEHIIKALENLEFKEYIAEALEVAAEHKEQQKNREKKSSKFEQSGVSRDELLRQQEELLSRARERFKNQNIAHDNHTTTAIPVPTASETETKEN.

Positions 11 to 75 (SLPKATVQKM…IAAEHIIKAL (65 aa)) constitute a Histone-fold domain. The span at 93-107 (EHKEQQKNREKKSSK) shows a compositional bias: basic and acidic residues. Disordered stretches follow at residues 93–116 (EHKEQQKNREKKSSKFEQSGVSRD) and 130–161 (RERFKNQNIAHDNHTTTAIPVPTASETETKEN). The segment covering 135-147 (NQNIAHDNHTTTA) has biased composition (polar residues).

The protein belongs to the NC2 beta/DR1 family.

The protein resides in the cytoplasm. The protein localises to the nucleus. In Schizosaccharomyces pombe (strain 972 / ATCC 24843) (Fission yeast), this protein is Negative cofactor 2 complex subunit beta (ncb2).